The sequence spans 416 residues: CBL-interacting serine/threonine-protein kinase 21 (416 aa).

Residues 12–264 enclose the Protein kinase domain; that stretch reads YEIGRTIGEG…AEIIIKDSWF (253 aa). Residues 18–26 and lysine 41 each bind ATP; that span reads IGEGNFAKV. The Proton acceptor role is filled by aspartate 134. The activation loop stretch occupies residues 152-178; the sequence is DFGLSAVPKSGDMLSTACGSPCYIAPE. Serine 156 is modified (phosphoserine). Threonine 167 carries the phosphothreonine modification. Residues 291–315 form the NAF domain; sequence ASSNFINAFQIIAMSSDLDLSGLFE. The interval 321 to 351 is PPI; sequence RYKTRIGSKNTAQETIKKIEAAATYVSLSVE.

This sequence belongs to the protein kinase superfamily. CAMK Ser/Thr protein kinase family. SNF1 subfamily. Interacts with CBL9. Requires Mn(2+) as cofactor.

The catalysed reaction is L-seryl-[protein] + ATP = O-phospho-L-seryl-[protein] + ADP + H(+). It catalyses the reaction L-threonyl-[protein] + ATP = O-phospho-L-threonyl-[protein] + ADP + H(+). Its function is as follows. CIPK serine-threonine protein kinases interact with CBL proteins. Binding of a CBL protein to the regulatory NAF domain of CIPK protein lead to the activation of the kinase in a calcium-dependent manner. In Arabidopsis thaliana (Mouse-ear cress), this protein is CBL-interacting serine/threonine-protein kinase 21 (CIPK21).